The primary structure comprises 92 residues: Probable acyl carrier protein (92 aa).

The Carrier domain maps to 11 to 92 (QVTFEELSAL…QVNATLRTAV (82 aa)). Residue S49 is modified to O-(pantetheine 4'-phosphoryl)serine.

In terms of processing, 4'-phosphopantetheine is transferred from CoA to a specific serine of the apo-ACP-like protein.

Involved in developmentally regulated synthesis of a compound biosynthetically related to polyketide antibiotics which is essential for spore color in Streptomyces halstedii. This Streptomyces halstedii protein is Probable acyl carrier protein (sch3).